Reading from the N-terminus, the 91-residue chain is MSEKEQEPILKASDLPEEMQTRIFELSNEAVSNYKIEKDIATYLKKELDQLYGATWHVIVGKSFGSYVTHEQGFFTYFYIGQLAFLIFKSG.

The protein belongs to the dynein light chain family. Homodimer. Cytoplasmic dynein consists of two catalytic heavy chains (HCs) and a number of non-catalytic subunits which present intermediate chains (ICs), light intermediate chains (LICs) and light chains (LCs). Component of the nuclear pore complex (NPC). NPC constitutes the exclusive means of nucleocytoplasmic transport. NPCs allow the passive diffusion of ions and small molecules and the active, nuclear transport receptor-mediated bidirectional transport of macromolecules such as proteins, RNAs, ribonucleoparticles (RNPs), and ribosomal subunits across the nuclear envelope. Due to its 8-fold rotational symmetry, all subunits are present with 8 copies or multiples thereof.

It localises to the cytoplasm. The protein resides in the cytoskeleton. It is found in the nucleus. The protein localises to the nuclear pore complex. Acts as one of several non-catalytic accessory components of the cytoplasmic dynein complex that are thought to be involved in linking dynein to cargos and to adapter proteins that regulate dynein function. Cytoplasmic dynein 1 acts as a motor for the intracellular retrograde motility of vesicles and organelles along microtubules. May play a role in changing or maintaining the spatial distribution of cytoskeletal structures. Also a component of the nuclear pore complex. This Debaryomyces hansenii (strain ATCC 36239 / CBS 767 / BCRC 21394 / JCM 1990 / NBRC 0083 / IGC 2968) (Yeast) protein is Dynein light chain 1, cytoplasmic (DYN2).